A 465-amino-acid chain; its full sequence is Argininosuccinate lyase (465 aa).

The protein belongs to the lyase 1 family. Argininosuccinate lyase subfamily.

It is found in the cytoplasm. The catalysed reaction is 2-(N(omega)-L-arginino)succinate = fumarate + L-arginine. It participates in amino-acid biosynthesis; L-arginine biosynthesis; L-arginine from L-ornithine and carbamoyl phosphate: step 3/3. The protein is Argininosuccinate lyase of Rhodopseudomonas palustris (strain HaA2).